The chain runs to 167 residues: Ribonuclease H (167 aa).

Residues 1 to 143 (MYKQIEIFTD…CDQLARKAAK (143 aa)) form the RNase H type-1 domain. Positions 10, 48, 70, and 135 each coordinate Mg(2+).

The protein belongs to the RNase H family. In terms of assembly, monomer. Mg(2+) is required as a cofactor.

The protein resides in the cytoplasm. The enzyme catalyses Endonucleolytic cleavage to 5'-phosphomonoester.. In terms of biological role, endonuclease that specifically degrades the RNA of RNA-DNA hybrids. This Blochmanniella floridana protein is Ribonuclease H.